Reading from the N-terminus, the 517-residue chain is L-amino-acid oxidase (517 aa).

Residues Met-1–Cys-18 form the signal peptide. A disulfide bridge connects residues Cys-29 and Cys-192. Residues Met-62–Ala-63, Glu-82–Ala-83, Arg-90, and Gly-106–Arg-109 contribute to the FAD site. Arg-109 contributes to the substrate binding site. N-linked (GlcNAc...) asparagine glycosylation occurs at Asn-191. Val-280 lines the FAD pocket. Cys-350 and Cys-431 are joined by a disulfide. Substrate is bound at residue Tyr-391. Residues Glu-476 and Gly-483–Thr-488 each bind FAD. Gly-483–Trp-484 is a substrate binding site.

It belongs to the flavin monoamine oxidase family. FIG1 subfamily. In terms of assembly, homodimer; non-covalently linked. Requires FAD as cofactor. Post-translationally, N-glycosylated. In terms of tissue distribution, expressed by the venom gland.

Its subcellular location is the secreted. It carries out the reaction an L-alpha-amino acid + O2 + H2O = a 2-oxocarboxylate + H2O2 + NH4(+). Functionally, catalyzes an oxidative deamination of predominantly hydrophobic and aromatic L-amino acids, thus producing hydrogen peroxide that may contribute to the diverse toxic effects of this enzyme. Exhibits diverse biological activities, such as hemorrhage, hemolysis, edema, apoptosis of vascular endothelial cells or tumor cell lines, antiparasitic activities, as well as regulation of platelet aggregation. Effects of snake L-amino oxidases on platelets are controversial, since they either induce aggregation or inhibit agonist-induced aggregation. These different effects are probably due to different experimental conditions. This protein has antibacterial activities. This chain is L-amino-acid oxidase, found in Pseudechis australis (Mulga snake).